We begin with the raw amino-acid sequence, 435 residues long: Hyaluronidase-1 (435 aa).

Residues 1 to 21 form the signal peptide; that stretch reads MAAHLLPICTLFLNLLSVAQG. Disulfide bonds link C43–C333 and C207–C221. N-linked (GlcNAc...) asparagine glycosylation is found at N70, N99, N107, and N121. The active-site Proton donor is the E131. 3 N-linked (GlcNAc...) asparagine glycosylation sites follow: N216, N256, and N350. Intrachain disulfides connect C358–C369, C363–C418, and C420–C429. The EGF-like domain occupies 418-429; it reads CRCYPGWRGTWC.

It belongs to the glycosyl hydrolase 56 family. In terms of tissue distribution, highly expressed in spleen, kidney, and lung.

The protein resides in the secreted. It localises to the lysosome. It catalyses the reaction Random hydrolysis of (1-&gt;4)-linkages between N-acetyl-beta-D-glucosamine and D-glucuronate residues in hyaluronate.. May have a role in promoting tumor progression. May block the TGFB1-enhanced cell growth. The sequence is that of Hyaluronidase-1 (HYAL1) from Sus scrofa (Pig).